Reading from the N-terminus, the 238-residue chain is Sugar fermentation stimulation protein homolog (238 aa).

Belongs to the SfsA family.

In Histophilus somni (strain 2336) (Haemophilus somnus), this protein is Sugar fermentation stimulation protein homolog.